A 286-amino-acid polypeptide reads, in one-letter code: uncharacterized protein (286 aa).

Positions 1–19 (MISKEYISLLSALLTKGYS) are cleaved as a signal peptide.

This is an uncharacterized protein from Acidianus filamentous virus 2 (isolate Italy/Pozzuoli) (AFV-2).